Consider the following 501-residue polypeptide: Uridine kinase (501 aa).

Residue Ser-17 is modified to Phosphoserine. Position 63-70 (63-70 (GASGSGKT)) interacts with ATP. Phosphoserine is present on Ser-276.

Belongs to the uridine kinase family.

It is found in the cytoplasm. The protein localises to the nucleus. The catalysed reaction is uridine + ATP = UMP + ADP + H(+). It catalyses the reaction cytidine + ATP = CMP + ADP + H(+). It participates in pyrimidine metabolism; CTP biosynthesis via salvage pathway; CTP from cytidine: step 1/3. It functions in the pathway pyrimidine metabolism; UMP biosynthesis via salvage pathway; UMP from uridine: step 1/1. In terms of biological role, catalyzes the conversion of uridine into UMP and cytidine into CMP in the pyrimidine salvage pathway. The protein is Uridine kinase (URK1) of Saccharomyces cerevisiae (strain ATCC 204508 / S288c) (Baker's yeast).